A 644-amino-acid chain; its full sequence is L-aspartate oxidase 2-a, chloroplastic (644 aa).

FAD is bound by residues 94 to 97 (SGIA), lysine 116, 123 to 130 (NTNYAQGG), and aspartate 294. Arginine 369 functions as the Proton donor/acceptor in the catalytic mechanism. Residues glutamate 454 and 470–471 (SL) contribute to the FAD site.

The protein belongs to the FAD-dependent oxidoreductase 2 family. NadB subfamily. The cofactor is FAD.

The protein localises to the plastid. It localises to the chloroplast. The catalysed reaction is L-aspartate + O2 = iminosuccinate + H2O2. The protein operates within alkaloid biosynthesis; nicotine biosynthesis. It participates in cofactor biosynthesis; NAD(+) biosynthesis; iminoaspartate from L-aspartate (oxidase route): step 1/1. Functionally, involved in the biosynthesis of pyridine alkaloid natural products, leading mainly to the production of anabasine, anatabine, nicotine and nornicotine, effective deterrents against herbivores with antiparasitic and pesticide properties (neurotoxins); nornicotine serves as the precursor in the synthesis of the carcinogen compound N'-nitrosonornicotine (NNN). Catalyzes the oxidation of L-aspartate to iminoaspartate. This is L-aspartate oxidase 2-a, chloroplastic from Nicotiana tabacum (Common tobacco).